The chain runs to 102 residues: uncharacterized protein (102 aa).

Residues 77–96 (FFSACVAKSYSSFFISICIL) traverse the membrane as a helical segment.

Its subcellular location is the membrane. This is an uncharacterized protein from Saccharomyces cerevisiae (strain ATCC 204508 / S288c) (Baker's yeast).